A 517-amino-acid polypeptide reads, in one-letter code: Tyrosine-protein kinase Src42A (517 aa).

Residues 1 to 47 (MGNCLTTQKGEPDKPADRIKLDDPPTIGVGVGVPQIPMPSHAGQPPE) are disordered. Residues 10 to 23 (GEPDKPADRIKLDD) show a composition bias toward basic and acidic residues. One can recognise an SH3 domain in the interval 63–124 (ANAKIFVALY…PSNYVAKLKS (62 aa)). The region spanning 130-222 (WYFRKIKRIE…GLCVNLCKPC (93 aa)) is the SH2 domain. Residues 248–504 (LKFVRKLGSG…TLQWKLEDFY (257 aa)) form the Protein kinase domain. Residues 254-262 (LGSGQFGDV) and K276 each bind ATP. D370 acts as the Proton acceptor in catalysis.

The protein belongs to the protein kinase superfamily. Tyr protein kinase family. SRC subfamily. Ubiquitous in early embryos, in stages 13-16 expression is seen in visceral mesoderm, hindgut, brain, anal pads and ventral ganglions. In larvae, expression is in CNS, wing disk, leg disk and photoreceptor precursors in the eye-antenna disks posterior to the morphogenetic furrow.

It carries out the reaction L-tyrosyl-[protein] + ATP = O-phospho-L-tyrosyl-[protein] + ADP + H(+). Functionally, required directly or indirectly for the phosphorylation of drpr which is necessary for the interaction of drpr with shark and subsequent glial phagocytic activity. Together with drpr and shark, promotes the migration of macrophages to sites of wounding as part of a signaling cascade where Src42A detects production of hydrogen peroxide at wound sites which triggers phosphorylation of drpr and subsequent recruitment and activation of shark. Essential for correct eye morphogenesis (ommatidial R7 neuron formation) which requires the Ras1/MAPK signal transduction pathway. May be involved in the regulation of cytoskeleton organization and cell-cell contacts in developing ommatidia. Involved in phosphorylation of Dscam1, a cell surface receptor involved in targeting of growing axons during eye morphogenesis, and its interaction partner the SH2/SH3 adapter protein dock/dreadlocks. During embryogenesis, involved in regulation of dorsal closure where it may have a role in activating the JNK pathway in leading edge cells during this process. In Drosophila melanogaster (Fruit fly), this protein is Tyrosine-protein kinase Src42A.